Reading from the N-terminus, the 390-residue chain is Ribonucleoside-diphosphate reductase subunit M2 (390 aa).

The residue at position 20 (Ser20) is a Phosphoserine. Phosphothreonine is present on Thr33. The Cy signature appears at 49–51 (RRI). Asp139, Glu170, and His173 together coordinate Fe cation. Residue Tyr177 is part of the active site. Residues Glu233, Glu267, and His270 each coordinate Fe cation.

The protein belongs to the ribonucleoside diphosphate reductase small chain family. As to quaternary structure, heterodimer of a large and a small subunit. Interacts (via Cy motif and when phosphorylated at Thr-33) with CCNF; the interaction occurs exclusively in G2 and early M. It depends on Fe cation as a cofactor. Post-translationally, phosphorylation on Ser-20 relieves the inhibitory effect on Wnt signaling. Phosphorylated on Thr-33 by CDK1 and CDK2; predominantly in G2 and M phase. Ubiquitinated by the SCF(CCNF) E3 ubiquitin-protein ligase complex; leading to its degradation by the proteasome.

It localises to the cytoplasm. It is found in the nucleus. The catalysed reaction is a 2'-deoxyribonucleoside 5'-diphosphate + [thioredoxin]-disulfide + H2O = a ribonucleoside 5'-diphosphate + [thioredoxin]-dithiol. Its function is as follows. Provides the precursors necessary for DNA synthesis. Catalyzes the biosynthesis of deoxyribonucleotides from the corresponding ribonucleotides. Inhibits Wnt signaling. In Rattus norvegicus (Rat), this protein is Ribonucleoside-diphosphate reductase subunit M2 (Rrm2).